Reading from the N-terminus, the 706-residue chain is uncharacterized protein (706 aa).

Coiled coils occupy residues 86 to 162, 269 to 299, and 337 to 427; these read TKNV…AKKI, DYLKDVEKSIEQLSDNYEQYLSNIDIFVNEL, and DDYI…QSDY.

This is an uncharacterized protein from Staphylococcus aureus (strain MRSA252).